Reading from the N-terminus, the 231-residue chain is ATP-dependent dethiobiotin synthetase BioD (231 aa).

12 to 17 is an ATP binding site; it reads DVGKTV. Thr-16 provides a ligand contact to Mg(2+). Lys-37 is a catalytic residue. Residue Thr-41 coordinates substrate. ATP contacts are provided by residues Asp-50, 109 to 112, 170 to 171, and 200 to 202; these read EGAG, GS, and PAG. The Mg(2+) site is built by Asp-50 and Glu-109.

It belongs to the dethiobiotin synthetase family. Homodimer. It depends on Mg(2+) as a cofactor.

The protein localises to the cytoplasm. The enzyme catalyses (7R,8S)-7,8-diammoniononanoate + CO2 + ATP = (4R,5S)-dethiobiotin + ADP + phosphate + 3 H(+). It participates in cofactor biosynthesis; biotin biosynthesis; biotin from 7,8-diaminononanoate: step 1/2. Functionally, catalyzes a mechanistically unusual reaction, the ATP-dependent insertion of CO2 between the N7 and N8 nitrogen atoms of 7,8-diaminopelargonic acid (DAPA, also called 7,8-diammoniononanoate) to form a ureido ring. This Rhodococcus jostii (strain RHA1) protein is ATP-dependent dethiobiotin synthetase BioD.